A 42-amino-acid chain; its full sequence is Ostricacin-4 (42 aa).

Intrachain disulfides connect C8–C36, C15–C30, and C20–C37.

It localises to the secreted. In terms of biological role, has antibacterial activity against the Gram-positive bacterium S.aureus 1056 MRSA (MIC=11.48 ug/ml) and the Gram-negative bacterium E.coli O157:H7 (MIC=12.03 ug/ml). Does not have antifungal activity against the yeast C.albicans 3153A. The protein is Ostricacin-4 of Struthio camelus (Common ostrich).